Consider the following 881-residue polypeptide: Beta-mannosidase (881 aa).

The first 18 residues, 1-18 (MHLHLLFLLALCGAGCMA), serve as a signal peptide directing secretion. N-linked (GlcNAc...) asparagine glycans are attached at residues asparagine 35, asparagine 77, asparagine 89, and asparagine 113. Residues cysteine 167 and cysteine 176 are joined by a disulfide bond. 190–192 (WDW) serves as a coordination point for substrate. 3 N-linked (GlcNAc...) asparagine glycosylation sites follow: asparagine 226, asparagine 297, and asparagine 302. Asparagine 456 lines the substrate pocket. Glutamate 457 (proton donor) is an active-site residue. Disulfide bonds link cysteine 540–cysteine 629, cysteine 732–cysteine 761, and cysteine 764–cysteine 769. Catalysis depends on glutamate 554, which acts as the Nucleophile. A glycan (N-linked (GlcNAc...) asparagine) is linked at asparagine 803.

Belongs to the glycosyl hydrolase 2 family. In terms of assembly, monomer.

The protein localises to the lysosome. It catalyses the reaction Hydrolysis of terminal, non-reducing beta-D-mannose residues in beta-D-mannosides.. It participates in glycan metabolism; N-glycan degradation. In terms of biological role, exoglycosidase that cleaves the single beta-linked mannose residue from the non-reducing end of all N-linked glycoprotein oligosaccharides. This Rattus norvegicus (Rat) protein is Beta-mannosidase.